The following is a 518-amino-acid chain: Tropomyosin-1, isoforms 33/34 (518 aa).

Positions 14 to 267 (DKDGALERAL…DDLIVEKERY (254 aa)) form a coiled coil. 2 disordered regions span residues 101–125 (RSEERLGSATAKLSEASQAADESER) and 288–518 (FWNP…APPA). Residues 293-305 (NPKPPTPKLPTPT) show a composition bias toward pro residues. The segment covering 318–348 (AAEAAAAAEAEAAEAAAAAGEAGPDGAPAAP) has biased composition (low complexity). Pro residues-rich tracts occupy residues 357–374 (EPTPPKEPTPPPPPPPPF) and 394–405 (EPPPPGSEPEPV). Residues 406–518 (PAAEGEAAPA…AAAEGEAPPA (113 aa)) are compositionally biased toward low complexity.

This sequence belongs to the tropomyosin family. In terms of assembly, homodimer. Both isoforms are only expressed in indirect flight muscles.

It is found in the cytoplasm. The protein localises to the cytoskeleton. Functionally, tropomyosin, in association with the troponin complex, plays a central role in the calcium dependent regulation of muscle contraction. This Drosophila melanogaster (Fruit fly) protein is Tropomyosin-1, isoforms 33/34 (Tm1).